A 98-amino-acid polypeptide reads, in one-letter code: Cystatin-B (98 aa).

An N-acetylmethionine modification is found at Met-1. A Secondary area of contact motif is present at residues 46–50 (QVVAG).

This sequence belongs to the cystatin family. Able to form dimers stabilized by noncovalent forces.

The protein localises to the cytoplasm. Its subcellular location is the nucleus. Functionally, this is an intracellular thiol proteinase inhibitor. Tightly binding reversible inhibitor of cathepsins L, H and B. This Pan troglodytes (Chimpanzee) protein is Cystatin-B (CSTB).